The chain runs to 264 residues: Thiazole synthase (264 aa).

Lys106 (schiff-base intermediate with DXP) is an active-site residue. 1-deoxy-D-xylulose 5-phosphate contacts are provided by residues Gly167, 193 to 194 (AG), and 215 to 216 (NT).

Belongs to the ThiG family. In terms of assembly, homotetramer. Forms heterodimers with either ThiH or ThiS.

The protein localises to the cytoplasm. It catalyses the reaction [ThiS sulfur-carrier protein]-C-terminal-Gly-aminoethanethioate + 2-iminoacetate + 1-deoxy-D-xylulose 5-phosphate = [ThiS sulfur-carrier protein]-C-terminal Gly-Gly + 2-[(2R,5Z)-2-carboxy-4-methylthiazol-5(2H)-ylidene]ethyl phosphate + 2 H2O + H(+). It functions in the pathway cofactor biosynthesis; thiamine diphosphate biosynthesis. Its function is as follows. Catalyzes the rearrangement of 1-deoxy-D-xylulose 5-phosphate (DXP) to produce the thiazole phosphate moiety of thiamine. Sulfur is provided by the thiocarboxylate moiety of the carrier protein ThiS. In vitro, sulfur can be provided by H(2)S. This Xanthomonas axonopodis pv. citri (strain 306) protein is Thiazole synthase.